We begin with the raw amino-acid sequence, 53 residues long: Large ribosomal subunit protein bL33B (53 aa).

The protein belongs to the bacterial ribosomal protein bL33 family.

This Sorangium cellulosum (strain So ce56) (Polyangium cellulosum (strain So ce56)) protein is Large ribosomal subunit protein bL33B.